Here is a 100-residue protein sequence, read N- to C-terminus: Glutamyl-tRNA(Gln) amidotransferase subunit C (100 aa).

This sequence belongs to the GatC family. In terms of assembly, heterotrimer of A, B and C subunits.

The catalysed reaction is L-glutamyl-tRNA(Gln) + L-glutamine + ATP + H2O = L-glutaminyl-tRNA(Gln) + L-glutamate + ADP + phosphate + H(+). The enzyme catalyses L-aspartyl-tRNA(Asn) + L-glutamine + ATP + H2O = L-asparaginyl-tRNA(Asn) + L-glutamate + ADP + phosphate + 2 H(+). Its function is as follows. Allows the formation of correctly charged Asn-tRNA(Asn) or Gln-tRNA(Gln) through the transamidation of misacylated Asp-tRNA(Asn) or Glu-tRNA(Gln) in organisms which lack either or both of asparaginyl-tRNA or glutaminyl-tRNA synthetases. The reaction takes place in the presence of glutamine and ATP through an activated phospho-Asp-tRNA(Asn) or phospho-Glu-tRNA(Gln). The polypeptide is Glutamyl-tRNA(Gln) amidotransferase subunit C (Rickettsia conorii (strain ATCC VR-613 / Malish 7)).